The sequence spans 49 residues: Agglutinin-1 (49 aa).

Homooligomer. In terms of processing, glycosylated.

In terms of biological role, beta-galactoside specific lectin. Has a hemagglutinating activity on erythrocytes. In Pomacea flagellata (Apple snail), this protein is Agglutinin-1.